Consider the following 146-residue polypeptide: MORN repeat-containing protein 4 (146 aa).

MORN repeat units lie at residues 16 to 38, 39 to 61, 62 to 84, and 85 to 107; these read YRGEWKEGRRHGFGQLMFADGGT, YLGHFENGLFNGFGVLTFSDGSR, YEGEFAQGKFNGVGVFIRHDNMT, and FEGEFKNGRVDGLGLLTFPDGSH.

Interacts with MYO3A. Retina.

The protein resides in the cytoplasm. It is found in the cell projection. The protein localises to the filopodium tip. Its subcellular location is the stereocilium. Plays a role in promoting axonal degeneration following neuronal injury by toxic insult or trauma. The chain is MORN repeat-containing protein 4 (MORN4) from Bos taurus (Bovine).